The sequence spans 437 residues: MSDSGGGSHKSSTTKPSVFGLNLYLVIAICSVFILLISLLIFLFVCLNRVSRARRMRVKHSSGSIPLVSKEISEIKTVGKFINSDDSKGKIGNEVVVVVSATSKEATSGFDTLSVASSGDVGTSEAMGWGKWYSLKDLEIATRGFSDDNMIGEGGYGVVYRADFSDGSVAAVKNLLNNKGQAEKEFKVEVEAIGKVRHKNLVGLMGYCADSAQSQRMLVYEYIDNGNLEQWLHGDVGPVSPLTWDIRMKIAIGTAKGLAYLHEGLEPKVVHRDVKSSNILLDKKWNAKVSDFGLAKLLGSETSYVTTRVMGTFGYVSPEYASTGMLNECSDVYSFGVLLMEIITGRSPVDYSRPPGEMNLVDWFKGMVASRRGEEVIDPKIKTSPPPRALKRALLVCLRCIDLDSSKRPKMGQIIHMLEAEDFPFRPEHRSNQERSK.

Residues 25–45 traverse the membrane as a helical segment; it reads LVIAICSVFILLISLLIFLFV. One can recognise a Protein kinase domain in the interval 145–426; that stretch reads FSDDNMIGEG…MLEAEDFPFR (282 aa). Residues 151–159 and Lys173 contribute to the ATP site; that span reads IGEGGYGVV. Tyr220 bears the Phosphotyrosine mark. The active-site Proton acceptor is the Asp273. Ser277 carries the post-translational modification Phosphoserine. Thr307 and Thr312 each carry phosphothreonine. Tyr320 bears the Phosphotyrosine mark.

This sequence belongs to the protein kinase superfamily. Ser/Thr protein kinase family.

It localises to the cell membrane. The enzyme catalyses L-seryl-[protein] + ATP = O-phospho-L-seryl-[protein] + ADP + H(+). It carries out the reaction L-threonyl-[protein] + ATP = O-phospho-L-threonyl-[protein] + ADP + H(+). This is Probable receptor-like serine/threonine-protein kinase At4g34500 from Arabidopsis thaliana (Mouse-ear cress).